An 810-amino-acid polypeptide reads, in one-letter code: Valine--tRNA ligase (810 aa).

The 'HIGH' region motif lies at 45-55; the sequence is PTISGQLHIGH. The 'KMSKS' region signature appears at 534–538; that stretch reads KMSKS. An ATP-binding site is contributed by Lys537.

It belongs to the class-I aminoacyl-tRNA synthetase family. ValS type 2 subfamily. In terms of assembly, monomer.

Its subcellular location is the cytoplasm. The enzyme catalyses tRNA(Val) + L-valine + ATP = L-valyl-tRNA(Val) + AMP + diphosphate. In terms of biological role, catalyzes the attachment of valine to tRNA(Val). As ValRS can inadvertently accommodate and process structurally similar amino acids such as threonine, to avoid such errors, it has a 'posttransfer' editing activity that hydrolyzes mischarged Thr-tRNA(Val) in a tRNA-dependent manner. The protein is Valine--tRNA ligase of Ehrlichia ruminantium (strain Welgevonden).